The primary structure comprises 348 residues: Secreted frizzled-related protein 4 (348 aa).

Residues 1–18 (MLLSILVALCLCVRLALG) form the signal peptide. The FZ domain maps to 19–139 (VRGAPCEAVR…VYDRGVCISP (121 aa)). 5 disulfides stabilise this stretch: Cys24–Cys85, Cys32–Cys78, Cys69–Cys108, Cys97–Cys136, and Cys101–Cys125. Residues Asn38 and Asn68 are each glycosylated (N-linked (GlcNAc...) asparagine). Asn116, Asn194, and Asn240 each carry an N-linked (GlcNAc...) asparagine glycan. The region spanning 178–296 (CKCKKVKPTL…WEERLQEQQR (119 aa)) is the NTR domain. The span at 289 to 303 (ERLQEQQRTTQDKKQ) shows a compositional bias: basic and acidic residues. Residues 289–348 (ERLQEQQRTTQDKKQIASRTSRSNPPKPKGRSPASKPASPKKNIKARSAPKKSNPKKSTS) are disordered. The segment covering 330-348 (KNIKARSAPKKSNPKKSTS) has biased composition (basic residues).

It belongs to the secreted frizzled-related protein (sFRP) family. In terms of tissue distribution, expressed in the involuting mammary gland, ovarian corpus luteum and prostate. In ovaries, low levels found in granulosa cells. High levels in corpora lutea of pregnant animals.

The protein resides in the secreted. Soluble frizzled-related proteins (sFRPS) function as modulators of Wnt signaling through direct interaction with Wnts. They have a role in regulating cell growth and differentiation in specific cell types. SFRP4 plays a role in bone morphogenesis. May also act as a regulator of adult uterine morphology and function. May also increase apoptosis during ovulation possibly through modulation of FZ1/FZ4/WNT4 signaling. Has phosphaturic effects by specifically inhibiting sodium-dependent phosphate uptake. This Rattus norvegicus (Rat) protein is Secreted frizzled-related protein 4 (Sfrp4).